The primary structure comprises 138 residues: Large ribosomal subunit protein mL54 (138 aa).

Residues 1 to 16 (MAARRLFGATGSWARW) constitute a mitochondrion transit peptide.

It belongs to the mitochondrion-specific ribosomal protein mL54 family. In terms of assembly, component of the mitochondrial ribosome large subunit (39S) which comprises a 16S rRNA and about 50 distinct proteins.

The protein resides in the mitochondrion. The sequence is that of Large ribosomal subunit protein mL54 (MRPL54) from Bos taurus (Bovine).